Consider the following 47-residue polypeptide: High light-inducible protein HliC (47 aa).

Residues 1-14 are Cytoplasmic-facing; sequence MNNENSKFGFTAFA. The Chlorophyll-binding motif motif lies at 15-20; sequence ENWNGR. The segment at 15 to 36 is a transmembrane helix; the sequence is ENWNGRLAMIGFSSALILELVS. The Lumenal, thylakoid portion of the chain corresponds to 37 to 47; that stretch reads GQGVLHFFGIL.

The protein belongs to the Hlip family. As to quaternary structure, forms heterodimers with both HliA and HliB; these are associated with photosystem II (PSII) assembly intermediates containing CP47 (psbB). In the absence of CP47 (psbB) and HliD, forms a homooligomer in vivo that binds 2 chlorophyll a and 1 beta-carotenoid per monomer. Cofractionates in an approximately 50 kDa fraction the thylakoid membrane with HliD. Associated in vivo with monomeric PSII. Purified in several chlorophyll- and carotenoid-containing complexes, including photosystem II (PSII) assembly intermediate complex RCII* (iD1, D1, D2, PsbE, PsbF, PsbI, Ycf39, Ycf48, HliC and HliD) and the Ycf39-Hlip complex (Ycf39, HliC, HliD and pigments).

It localises to the cellular thylakoid membrane. Functionally, forms a number of heteromers involved in photosystem II (PSII) assembly and/or repair under high light stress. Required for binding of chlorophyll and carotenoids by the Ycf39-Hlip complex. The Ycf39-Hlip complex binds D1 at an early stage of PSII assembly along with Ycf48, ribosomes and ChlG, the last enzyme in chlorophyll biosynthesis; it may be involved in chlorophyll reuse and delivery to D1 in the initial stages of PSII assembly. HliA-HliC and HliB-HliC heterodimers bind chlorophyll and carotenoids in a 1:0.6 ratio. Complexes bind mostly beta-carotenoid, but minor amounts of echinenone and beta-crytoxanthin are also detected. The complexes efficiently quench chlorophyll fluorescence, contributing to photoprotection. Deletion of 4 to 5 members of the Hlip family suggests the proteins are involved in regulation of chlorophyll biosynthesis, in stabilization of chlorophyll-binding proteins and/or in reuse of chlorophylls, and may regulate tetrapyrrole biosynthesis. Might bind chlorophyll and/or carotenoids in association with HliD (called the ScpBE pair). In terms of biological role, the Hlips might regulate tetrapyrrole biosynthesis, maybe at the level of aminolevulinic acid synthesis and probably stabilize PSII assembly intermediates. This is High light-inducible protein HliC (hliC) from Synechocystis sp. (strain ATCC 27184 / PCC 6803 / Kazusa).